Consider the following 847-residue polypeptide: Alanine--tRNA ligase (847 aa).

Residues histidine 554, histidine 558, cysteine 656, and histidine 660 each contribute to the Zn(2+) site.

Belongs to the class-II aminoacyl-tRNA synthetase family. It depends on Zn(2+) as a cofactor.

It is found in the cytoplasm. It catalyses the reaction tRNA(Ala) + L-alanine + ATP = L-alanyl-tRNA(Ala) + AMP + diphosphate. Catalyzes the attachment of alanine to tRNA(Ala) in a two-step reaction: alanine is first activated by ATP to form Ala-AMP and then transferred to the acceptor end of tRNA(Ala). Also edits incorrectly charged Ser-tRNA(Ala) and Gly-tRNA(Ala) via its editing domain. The polypeptide is Alanine--tRNA ligase (Helicobacter pylori (strain J99 / ATCC 700824) (Campylobacter pylori J99)).